A 103-amino-acid chain; its full sequence is Small ribosomal subunit protein uS10 (103 aa).

It belongs to the universal ribosomal protein uS10 family. Part of the 30S ribosomal subunit.

Involved in the binding of tRNA to the ribosomes. The polypeptide is Small ribosomal subunit protein uS10 (Alkalilimnicola ehrlichii (strain ATCC BAA-1101 / DSM 17681 / MLHE-1)).